A 248-amino-acid chain; its full sequence is Uridylate kinase (248 aa).

11 to 14 (KISG) lines the ATP pocket. G53 contributes to the UMP binding site. ATP-binding residues include G54 and R58. UMP-binding positions include D74 and 135 to 142 (AGSPYLTT). ATP contacts are provided by T162, Y169, and D172.

Belongs to the UMP kinase family. As to quaternary structure, homohexamer.

The protein localises to the cytoplasm. The catalysed reaction is UMP + ATP = UDP + ADP. Its pathway is pyrimidine metabolism; CTP biosynthesis via de novo pathway; UDP from UMP (UMPK route): step 1/1. Its activity is regulated as follows. Inhibited by UTP. In terms of biological role, catalyzes the reversible phosphorylation of UMP to UDP. This chain is Uridylate kinase, found in Chlamydia pneumoniae (Chlamydophila pneumoniae).